A 1224-amino-acid chain; its full sequence is Cytosolic carboxypeptidase 1 (1224 aa).

The interval 361-398 is disordered; that stretch reads PPDVDDVVDESDDNDDAETESEIETEDDKDQNFKNDDI. Positions 363 to 389 are enriched in acidic residues; that stretch reads DVDDVVDESDDNDDAETESEIETEDDK. The 291-residue stretch at 846-1136 folds into the Peptidase M14 domain; that stretch reads YPYTYSTLKM…KFCVGLLRLK (291 aa). Zn(2+) is bound by residues H918, E921, and H1015. The active-site Proton donor/acceptor is E1100. Over residues 1186–1197 the composition is skewed to acidic residues; that stretch reads SAESNDDQDAEL. Residues 1186-1224 form a disordered region; it reads SAESNDDQDAELADNVGDYEANNQEDGLSDSDSTRILLS. The segment covering 1206–1224 has biased composition (polar residues); that stretch reads ANNQEDGLSDSDSTRILLS.

It belongs to the peptidase M14 family. Zn(2+) is required as a cofactor.

The protein localises to the cytoplasm. It is found in the cytosol. It localises to the nucleus. The protein resides in the mitochondrion. The catalysed reaction is (L-glutamyl)(n+1)-gamma-L-glutamyl-L-glutamyl-[protein] + H2O = (L-glutamyl)(n)-gamma-L-glutamyl-L-glutamyl-[protein] + L-glutamate. The enzyme catalyses C-terminal L-alpha-aminoacyl-L-glutamyl-L-glutamyl-[tubulin] + H2O = C-terminal L-alpha-aminoacyl-L-glutamyl-[tubulin] + L-glutamate. Metallocarboxypeptidase that mediates protein deglutamylation of tubulin and non-tubulin target proteins. Catalyzes the removal of polyglutamate side chains present on the gamma-carboxyl group of glutamate residues within the C-terminal tail of alpha- and beta-tubulin. Specifically cleaves tubulin long-side-chains, while it is not able to remove the branching point glutamate. Also catalyzes the removal of polyglutamate residues from the carboxy-terminus of alpha-tubulin as well as non-tubulin proteins. This Gallus gallus (Chicken) protein is Cytosolic carboxypeptidase 1 (AGTPBP1).